Consider the following 1016-residue polypeptide: Probably inactive leucine-rich repeat receptor-like protein kinase At3g28040 (1016 aa).

Residues 1 to 26 (MGKQRRTMISFTLFLTLTMMSSLING) form the signal peptide. Residues 27-646 (DTDSIQLNDD…FHRRMFLSVS (620 aa)) lie on the Extracellular side of the membrane. LRR repeat units follow at residues 102–124 (RLKVLSLSNNNFTGNINALSNNN), 125–147 (HLQKLDLSHNNLSGQIPSSLGSI), 149–171 (SLQHLDLTGNSFSGTLSDDLFNN), 174–196 (SLRYLSLSHNHLEGQIPSTLFRC), 198–219 (VLNSLNLSRNRFSGNPSFVSGI), 224–245 (RLRALDLSSNSLSGSIPLGILS), 248–270 (NLKELQLQRNQFSGALPSDIGLC), 272–295 (HLNRVDLSSNHFSGELPRTLQKLK), 296–318 (SLNHFDVSNNLLSGDFPPWIGDM), 320–342 (GLVHLDFSSNELTGKLPSSISNL), 344–366 (SLKDLNLSENKLSGEVPESLESC), 368–390 (ELMIVQLKGNDFSGNIPDGFFDL), 391–413 (GLQEMDFSGNGLTGSIPRGSSRL), 416–438 (SLIRLDLSHNSLTGSIPGEVGLF), 440–462 (HMRYLNLSWNHFNTRVPPEIEFL), 464–486 (NLTVLDLRNSALIGSVPADICES), 488–510 (SLQILQLDGNSLTGSIPEGIGNC), 512–535 (SLKLLSLSHNNLTGPIPKSLSNLQ), 536–559 (ELKILKLEANKLSGEIPKELGDLQ), and 560–582 (NLLLVNVSFNRLIGRLPLGDVFQ). N112, N135, and N171 each carry an N-linked (GlcNAc...) asparagine glycan. N203 carries N-linked (GlcNAc...) asparagine glycosylation. N349 carries N-linked (GlcNAc...) asparagine glycosylation. 4 N-linked (GlcNAc...) asparagine glycosylation sites follow: N445, N464, N509, and N522. N-linked (GlcNAc...) asparagine glycosylation is present at N565. The chain crosses the membrane as a helical span at residues 647–667 (VIVAISAAILIFSGVIIITLL). Residues 668–1016 (NASVRRRLAF…PVPHRIMDSF (349 aa)) lie on the Cytoplasmic side of the membrane. The region spanning 726 to 1013 (LNKASRIGEG…INSPVPHRIM (288 aa)) is the Protein kinase domain. ATP is bound by residues 732–740 (IGEGVFGTV) and K755. 2 positions are modified to phosphotyrosine: Y841 and Y898.

It belongs to the protein kinase superfamily. Ser/Thr protein kinase family.

It localises to the membrane. The polypeptide is Probably inactive leucine-rich repeat receptor-like protein kinase At3g28040 (Arabidopsis thaliana (Mouse-ear cress)).